A 424-amino-acid polypeptide reads, in one-letter code: GTPase HflX (424 aa).

The Hflx-type G domain occupies 194-364; that stretch reads YTVALTGYTG…AVVEMLPEKV (171 aa). Residues 200 to 207, 225 to 229, 246 to 249, 314 to 317, and 342 to 344 contribute to the GTP site; these read GYTGAGKT, FATLS, DTIG, NKID, and SAA. Mg(2+) is bound by residues Thr207 and Thr227.

Belongs to the TRAFAC class OBG-HflX-like GTPase superfamily. HflX GTPase family. As to quaternary structure, monomer. Associates with the 50S ribosomal subunit. Mg(2+) serves as cofactor.

It is found in the cytoplasm. Its function is as follows. GTPase that associates with the 50S ribosomal subunit and may have a role during protein synthesis or ribosome biogenesis. The sequence is that of GTPase HflX from Thermofilum pendens (strain DSM 2475 / Hrk 5).